A 218-amino-acid polypeptide reads, in one-letter code: Small ribosomal subunit protein uS3c (218 aa).

Residues 47–118 enclose the KH type-2 domain; the sequence is VQKHMRISSG…RLNITITRIA (72 aa).

Belongs to the universal ribosomal protein uS3 family. Part of the 30S ribosomal subunit.

The protein localises to the plastid. It localises to the chloroplast. This Amborella trichopoda protein is Small ribosomal subunit protein uS3c (rps3).